Reading from the N-terminus, the 242-residue chain is MAPK-interacting and spindle-stabilizing protein-like (242 aa).

2 disordered regions span residues 1–145 and 192–242; these read MSDE…SLGP and PPGA…HSYH. At Ser-2 the chain carries N-acetylserine. A phosphoserine mark is found at Ser-2, Ser-6, and Ser-15. The segment covering 13–29 has biased composition (polar residues); that stretch reads EQSSAKPPAVTNTKAGH. Low complexity predominate over residues 30 to 43; it reads SSQGWPGSSPWSNP. Pro residues-rich tracts occupy residues 44 to 53 and 75 to 114; these read SAPPAMPSGL and SMPP…PGPT. The segment covering 192-210 has biased composition (low complexity); it reads PPGAWGPAAPYPGPAGSYP.

The protein belongs to the MISS family.

This chain is MAPK-interacting and spindle-stabilizing protein-like (Mapk1ip1l), found in Mus musculus (Mouse).